The primary structure comprises 238 residues: Large ribosomal subunit protein uL2 (238 aa).

The tract at residues 197–219 is disordered; sequence ASDHPFGGKRHSNHSKPFTVSKW.

It belongs to the universal ribosomal protein uL2 family. As to quaternary structure, part of the 50S ribosomal subunit. Forms a bridge to the 30S subunit in the 70S ribosome.

Its function is as follows. One of the primary rRNA binding proteins. Required for association of the 30S and 50S subunits to form the 70S ribosome, for tRNA binding and peptide bond formation. It has been suggested to have peptidyltransferase activity; this is somewhat controversial. Makes several contacts with the 16S rRNA in the 70S ribosome. The protein is Large ribosomal subunit protein uL2 of Nanoarchaeum equitans (strain Kin4-M).